The following is a 180-amino-acid chain: Adenine phosphoribosyltransferase (180 aa).

Belongs to the purine/pyrimidine phosphoribosyltransferase family. In terms of assembly, homodimer.

The protein localises to the cytoplasm. It carries out the reaction AMP + diphosphate = 5-phospho-alpha-D-ribose 1-diphosphate + adenine. Its pathway is purine metabolism; AMP biosynthesis via salvage pathway; AMP from adenine: step 1/1. Functionally, catalyzes a salvage reaction resulting in the formation of AMP, that is energically less costly than de novo synthesis. The protein is Adenine phosphoribosyltransferase of Mycolicibacterium paratuberculosis (strain ATCC BAA-968 / K-10) (Mycobacterium paratuberculosis).